Here is a 316-residue protein sequence, read N- to C-terminus: Small ribosomal subunit protein mS26 (316 aa).

The interval Thr-41 to Arg-71 is disordered.

Belongs to the mitochondrion-specific ribosomal protein mS26 family. As to quaternary structure, component of the mitochondrial small ribosomal subunit (mt-SSU). Mature N.crassa 74S mitochondrial ribosomes consist of a small (37S) and a large (54S) subunit. The 37S small subunit contains a 16S ribosomal RNA (16S mt-rRNA) and 32 different proteins. The 54S large subunit contains a 23S rRNA (23S mt-rRNA) and 42 different proteins.

It localises to the mitochondrion. Its function is as follows. Component of the mitochondrial ribosome (mitoribosome), a dedicated translation machinery responsible for the synthesis of mitochondrial genome-encoded proteins, including at least some of the essential transmembrane subunits of the mitochondrial respiratory chain. The mitoribosomes are attached to the mitochondrial inner membrane and translation products are cotranslationally integrated into the membrane. This chain is Small ribosomal subunit protein mS26 (pet123), found in Neurospora crassa (strain ATCC 24698 / 74-OR23-1A / CBS 708.71 / DSM 1257 / FGSC 987).